The following is a 1414-amino-acid chain: DNA-directed RNA polymerase subunit beta' (1414 aa).

C70, C72, C85, and C88 together coordinate Zn(2+). Residues D460, D462, and D464 each coordinate Mg(2+). Positions 815, 889, 896, and 899 each coordinate Zn(2+). The interval 1395-1414 (EAEAQFADVSSTPDSDTDAS) is disordered.

It belongs to the RNA polymerase beta' chain family. As to quaternary structure, the RNAP catalytic core consists of 2 alpha, 1 beta, 1 beta' and 1 omega subunit. When a sigma factor is associated with the core the holoenzyme is formed, which can initiate transcription. Mg(2+) is required as a cofactor. It depends on Zn(2+) as a cofactor.

It catalyses the reaction RNA(n) + a ribonucleoside 5'-triphosphate = RNA(n+1) + diphosphate. Its function is as follows. DNA-dependent RNA polymerase catalyzes the transcription of DNA into RNA using the four ribonucleoside triphosphates as substrates. The sequence is that of DNA-directed RNA polymerase subunit beta' from Janthinobacterium sp. (strain Marseille) (Minibacterium massiliensis).